The chain runs to 294 residues: Sulfotransferase 1E1 (294 aa).

47–52 (KSGTTW) is a 3'-phosphoadenylyl sulfate binding site. A substrate-binding site is contributed by 105–107 (KTH). His107 serves as the catalytic Proton acceptor. 3'-phosphoadenylyl sulfate-binding positions include Arg129, Ser137, Tyr192, 226-231 (TSFQEM), and 256-258 (RKG).

This sequence belongs to the sulfotransferase 1 family. As to quaternary structure, homodimer. Liver, intestine and at lower level in the kidney.

It is found in the cytoplasm. Its subcellular location is the cytosol. The catalysed reaction is estrone + 3'-phosphoadenylyl sulfate = estrone 3-sulfate + adenosine 3',5'-bisphosphate + H(+). The enzyme catalyses (24S)-hydroxycholesterol + 3'-phosphoadenylyl sulfate = (24S)-hydroxycholesterol 3-sulfate + adenosine 3',5'-bisphosphate + H(+). It catalyses the reaction 17beta-estradiol + 3'-phosphoadenylyl sulfate = 17beta-estradiol 3-sulfate + adenosine 3',5'-bisphosphate + H(+). It carries out the reaction 3beta-hydroxyandrost-5-en-17-one + 3'-phosphoadenylyl sulfate = dehydroepiandrosterone 3-sulfate + adenosine 3',5'-bisphosphate + H(+). The catalysed reaction is 4-ethylphenol + 3'-phosphoadenylyl sulfate = 4-ethylphenyl sulfate + adenosine 3',5'-bisphosphate + H(+). With respect to regulation, inhibited by estradiol. In terms of biological role, sulfotransferase that utilizes 3'-phospho-5'-adenylyl sulfate (PAPS) as sulfonate donor to catalyze the sulfate conjugation of estradiol and estrone. Is a key enzyme in estrogen homeostasis, the sulfation of estrogens leads to their inactivation. Also sulfates dehydroepiandrosterone (DHEA), pregnenolone, (24S)-hydroxycholesterol and xenobiotic compounds like ethinylestradiol, equalenin, diethyl stilbesterol and 1-naphthol at significantly lower efficiency. Does not sulfonate cortisol, testosterone and dopamine. May play a role in gut microbiota-host metabolic interaction. O-sulfonates 4-ethylphenol (4-EP), a dietary tyrosine-derived metabolite produced by gut bacteria. The product 4-EPS crosses the blood-brain barrier and may negatively regulate oligodendrocyte maturation and myelination, affecting the functional connectivity of different brain regions associated with the limbic system. The protein is Sulfotransferase 1E1 (SULT1E1) of Homo sapiens (Human).